The primary structure comprises 268 residues: Fibroblast growth factor 5 (268 aa).

Positions 1–20 (MSLSFLLLLFFSHLILSAWA) are cleaved as a signal peptide. The disordered stretch occupies residues 26–81 (LAPKGQPGPAATDRNPRGSSSRQSSSSAMSSSSASSSPAASLGSQGSGLEQSSFQW). Positions 43-80 (GSSSRQSSSSAMSSSSASSSPAASLGSQGSGLEQSSFQ) are enriched in low complexity. N-linked (GlcNAc...) asparagine glycosylation is present at N110. The tract at residues 233–255 (VPEKKKPPSPIKPKIPLSAPRKN) is disordered.

This sequence belongs to the heparin-binding growth factors family. Interacts with FGFR1 and FGFR2. Affinity between fibroblast growth factors (FGFs) and their receptors is increased by heparan sulfate glycosaminoglycans that function as coreceptors. Expressed in neonatal brain.

The protein resides in the secreted. Plays an important role in the regulation of cell proliferation and cell differentiation. Required for normal regulation of the hair growth cycle. Functions as an inhibitor of hair elongation by promoting progression from anagen, the growth phase of the hair follicle, into catagen the apoptosis-induced regression phase. This is Fibroblast growth factor 5 (FGF5) from Homo sapiens (Human).